Here is a 240-residue protein sequence, read N- to C-terminus: tRNA (guanine-N(7)-)-methyltransferase (240 aa).

Positions 70, 95, 122, and 145 each coordinate S-adenosyl-L-methionine. Asp-145 is a catalytic residue. Residues Lys-149, Asp-181, and 218–221 (TKFE) each bind substrate.

Belongs to the class I-like SAM-binding methyltransferase superfamily. TrmB family.

The enzyme catalyses guanosine(46) in tRNA + S-adenosyl-L-methionine = N(7)-methylguanosine(46) in tRNA + S-adenosyl-L-homocysteine. Its pathway is tRNA modification; N(7)-methylguanine-tRNA biosynthesis. Its function is as follows. Catalyzes the formation of N(7)-methylguanine at position 46 (m7G46) in tRNA. The sequence is that of tRNA (guanine-N(7)-)-methyltransferase from Pseudomonas entomophila (strain L48).